The following is a 565-amino-acid chain: Oxygen-dependent choline dehydrogenase (565 aa).

6–35 is an FAD binding site; it reads DYIIIGAGSAGNVLATRLTEDADVSVLLLE. His475 (proton acceptor) is an active-site residue. The disordered stretch occupies residues 541-565; sequence RSNAPYFVAGERPVRGQPQRAVSAA.

Belongs to the GMC oxidoreductase family. FAD serves as cofactor.

It catalyses the reaction choline + A = betaine aldehyde + AH2. The enzyme catalyses betaine aldehyde + NAD(+) + H2O = glycine betaine + NADH + 2 H(+). The protein operates within amine and polyamine biosynthesis; betaine biosynthesis via choline pathway; betaine aldehyde from choline (cytochrome c reductase route): step 1/1. Involved in the biosynthesis of the osmoprotectant glycine betaine. Catalyzes the oxidation of choline to betaine aldehyde and betaine aldehyde to glycine betaine at the same rate. The chain is Oxygen-dependent choline dehydrogenase from Ectopseudomonas mendocina (strain ymp) (Pseudomonas mendocina).